The chain runs to 472 residues: Glutamine synthetase (472 aa).

One can recognise a GS beta-grasp domain in the interval 17–101 (NNVKFVLLRF…IRCSVYEPTT (85 aa)). The GS catalytic domain maps to 109 to 472 (PRSIAIRAEN…HPVEFEMYYA (364 aa)). Mg(2+) is bound by residues glutamate 134 and glutamate 136. Glutamate 212 lines the ATP pocket. Positions 217 and 225 each coordinate Mg(2+). L-glutamate contacts are provided by residues 269–270 (NG) and glycine 270. Histidine 274 provides a ligand contact to Mg(2+). ATP is bound by residues 276-278 (NMS) and serine 278. 3 residues coordinate L-glutamate: arginine 326, glutamate 332, and arginine 344. Residues arginine 344, arginine 349, and lysine 357 each contribute to the ATP site. Glutamate 362 serves as a coordination point for Mg(2+). Position 364 (arginine 364) interacts with L-glutamate. O-AMP-tyrosine is present on tyrosine 402.

The protein belongs to the glutamine synthetase family. As to quaternary structure, oligomer of 12 subunits arranged in the form of two hexameric ring. Mg(2+) serves as cofactor.

The protein localises to the cytoplasm. The enzyme catalyses L-glutamate + NH4(+) + ATP = L-glutamine + ADP + phosphate + H(+). With respect to regulation, the activity of this enzyme could be controlled by adenylation under conditions of abundant glutamine. Catalyzes the ATP-dependent biosynthesis of glutamine from glutamate and ammonia. This is Glutamine synthetase from Haemophilus influenzae (strain ATCC 51907 / DSM 11121 / KW20 / Rd).